The sequence spans 445 residues: Phosphoglucosamine mutase (445 aa).

The active-site Phosphoserine intermediate is the Ser99. Residues Ser99, Asp242, Asp244, and Asp246 each coordinate Mg(2+). Ser99 is modified (phosphoserine).

It belongs to the phosphohexose mutase family. It depends on Mg(2+) as a cofactor. Post-translationally, activated by phosphorylation.

The catalysed reaction is alpha-D-glucosamine 1-phosphate = D-glucosamine 6-phosphate. Its function is as follows. Catalyzes the conversion of glucosamine-6-phosphate to glucosamine-1-phosphate. This Campylobacter jejuni (strain RM1221) protein is Phosphoglucosamine mutase.